A 411-amino-acid chain; its full sequence is Aspartate kinase (411 aa).

Residues 265–348 (LTIRGVPDTP…KIAKVSIVGV (84 aa)) enclose the ACT domain.

It belongs to the aspartokinase family.

It localises to the cytoplasm. It carries out the reaction L-aspartate + ATP = 4-phospho-L-aspartate + ADP. The protein operates within amino-acid biosynthesis; L-lysine biosynthesis via DAP pathway; (S)-tetrahydrodipicolinate from L-aspartate: step 1/4. It functions in the pathway amino-acid biosynthesis; L-methionine biosynthesis via de novo pathway; L-homoserine from L-aspartate: step 1/3. Its pathway is amino-acid biosynthesis; L-threonine biosynthesis; L-threonine from L-aspartate: step 1/5. Its activity is regulated as follows. Allosterically feedback inhibited by L-lysine and L-threonine individually and also subject to a concerted feedback inhibition by these amino acids. Involved in the biosynthesis of L-aspartate-beta-semialdehyde which is a central intermediate in the biosynthesis of different amino acids (L-lysine, L-methionine, L-threonine). Catalyzes the phosphorylation of the beta-carboxyl group of L-aspartate to yield 4-phospho-L-aspartate. In Pseudomonas putida (strain ATCC 47054 / DSM 6125 / CFBP 8728 / NCIMB 11950 / KT2440), this protein is Aspartate kinase.